A 101-amino-acid polypeptide reads, in one-letter code: YcgL domain-containing protein ACIAD2309 (101 aa).

One can recognise a YcgL domain in the interval 1–93; that stretch reads MHCDIYRSSK…PPEGFINPSD (93 aa).

The protein is YcgL domain-containing protein ACIAD2309 of Acinetobacter baylyi (strain ATCC 33305 / BD413 / ADP1).